Consider the following 350-residue polypeptide: Histidinol-phosphate aminotransferase 1 (350 aa).

Lys-211 carries the N6-(pyridoxal phosphate)lysine modification.

The protein belongs to the class-II pyridoxal-phosphate-dependent aminotransferase family. Histidinol-phosphate aminotransferase subfamily. In terms of assembly, homodimer. The cofactor is pyridoxal 5'-phosphate.

It catalyses the reaction L-histidinol phosphate + 2-oxoglutarate = 3-(imidazol-4-yl)-2-oxopropyl phosphate + L-glutamate. It participates in amino-acid biosynthesis; L-histidine biosynthesis; L-histidine from 5-phospho-alpha-D-ribose 1-diphosphate: step 7/9. The polypeptide is Histidinol-phosphate aminotransferase 1 (Trichormus variabilis (strain ATCC 29413 / PCC 7937) (Anabaena variabilis)).